A 157-amino-acid chain; its full sequence is Putative pre-16S rRNA nuclease (157 aa).

The protein belongs to the YqgF nuclease family.

The protein localises to the cytoplasm. Functionally, could be a nuclease involved in processing of the 5'-end of pre-16S rRNA. The chain is Putative pre-16S rRNA nuclease from Ruegeria sp. (strain TM1040) (Silicibacter sp.).